Consider the following 436-residue polypeptide: Trigger factor (436 aa).

The PPIase FKBP-type domain occupies 163-248; it reads GDQVIIDFVG…VHSVQTKVLP (86 aa).

It belongs to the FKBP-type PPIase family. Tig subfamily.

Its subcellular location is the cytoplasm. The enzyme catalyses [protein]-peptidylproline (omega=180) = [protein]-peptidylproline (omega=0). Functionally, involved in protein export. Acts as a chaperone by maintaining the newly synthesized protein in an open conformation. Functions as a peptidyl-prolyl cis-trans isomerase. This is Trigger factor from Hydrogenovibrio crunogenus (strain DSM 25203 / XCL-2) (Thiomicrospira crunogena).